The chain runs to 422 residues: Secernin-3 (422 aa).

A propeptide spanning residues 1–5 is cleaved from the precursor; that stretch reads MEPCS. The active site involves cysteine 6. Cysteine 6 is subject to Glyoxylic acid (Cys); alternate. Cysteine 6 carries the post-translational modification Pyruvic acid (Cys); alternate.

This sequence belongs to the peptidase C69 family. Secernin subfamily.

Functionally, plays a role in thermal nociception. The protein is Secernin-3 (SCRN3) of Bos taurus (Bovine).